The chain runs to 399 residues: Bombesin receptor subtype-3 (399 aa).

The Extracellular portion of the chain corresponds to 1–41 (MSQRQPQSPNQTLISITNDTETSSSAVSNDTTPKGWTGDNS). N-linked (GlcNAc...) asparagine glycosylation is found at asparagine 10, asparagine 18, and asparagine 29. The chain crosses the membrane as a helical span at residues 42 to 63 (PGIEALCAIYITYAVIISVGIL). The Cytoplasmic segment spans residues 64-82 (GNAILIKVFFKTKSMQTVP). Residues 83 to 103 (NIFITSLAFGDLLLLLTCVPV) traverse the membrane as a helical segment. Over 104 to 121 (DATHYLAEGWLFGKVGCK) the chain is Extracellular. A disulfide bond links cysteine 120 and cysteine 203. Residues 122-143 (VLSFIRLTSVGVSVFTLTILSA) form a helical membrane-spanning segment. The Cytoplasmic portion of the chain corresponds to 144-163 (DRYKAVVKPLERQPSNAILK). Residues 164-184 (TCAKAGGIWIMAMIFALPEAI) traverse the membrane as a helical segment. The Extracellular segment spans residues 185-220 (FSNVYTFQDPNRNVTFESCNSYPISERLLQEIHSLL). Residues 221-241 (CFLVFYIIPLSIISVYYSLIA) form a helical membrane-spanning segment. The Cytoplasmic segment spans residues 242–272 (RTLYKSTLNIPTEEQSHARKQIESRKRIAKT). The chain crosses the membrane as a helical span at residues 273–293 (VLVLVALFALCWLPNHLLYLY). Topologically, residues 294–313 (HSFTYESYAEPSDVPFVVTI) are extracellular. Residues 314 to 333 (FSRVLAFSNSCVNPFALYWL) form a helical membrane-spanning segment. Residues 334 to 399 (SKTFQKHFKA…STAKKGEDKV (66 aa)) are Cytoplasmic-facing. Cysteine 347 carries S-palmitoyl cysteine lipidation.

The protein belongs to the G-protein coupled receptor 1 family. In terms of assembly, interacts with C6orf89.

The protein resides in the cell membrane. Functionally, role in sperm cell division, maturation, or function. This receptor mediates its action by association with G proteins that activate a phosphatidylinositol-calcium second messenger system. This is Bombesin receptor subtype-3 (Brs3) from Rattus norvegicus (Rat).